A 339-amino-acid chain; its full sequence is Methionyl-tRNA formyltransferase (339 aa).

Residue 110–113 (SLLP) participates in (6S)-5,6,7,8-tetrahydrofolate binding.

It belongs to the Fmt family.

The catalysed reaction is L-methionyl-tRNA(fMet) + (6R)-10-formyltetrahydrofolate = N-formyl-L-methionyl-tRNA(fMet) + (6S)-5,6,7,8-tetrahydrofolate + H(+). Functionally, attaches a formyl group to the free amino group of methionyl-tRNA(fMet). The formyl group appears to play a dual role in the initiator identity of N-formylmethionyl-tRNA by promoting its recognition by IF2 and preventing the misappropriation of this tRNA by the elongation apparatus. This Prochlorococcus marinus (strain MIT 9211) protein is Methionyl-tRNA formyltransferase.